A 172-amino-acid chain; its full sequence is Adenine phosphoribosyltransferase (172 aa).

Belongs to the purine/pyrimidine phosphoribosyltransferase family. As to quaternary structure, homodimer.

It is found in the cytoplasm. It catalyses the reaction AMP + diphosphate = 5-phospho-alpha-D-ribose 1-diphosphate + adenine. Its pathway is purine metabolism; AMP biosynthesis via salvage pathway; AMP from adenine: step 1/1. In terms of biological role, catalyzes a salvage reaction resulting in the formation of AMP, that is energically less costly than de novo synthesis. The protein is Adenine phosphoribosyltransferase of Exiguobacterium sibiricum (strain DSM 17290 / CCUG 55495 / CIP 109462 / JCM 13490 / 255-15).